The chain runs to 535 residues: MSDHDRDFDVVVVGGGHNGLVAAAYLARAGLRVRLLERLAQTGGAAVSIQAFDGVEVALSRYSYLVSLLPSRIVADLGAPVRLARRPFSSYTPAPATAGRSGLLIGPTGEPRAAHLAAIGAAPDAHGFAAFYRRCRLVTARLWPTLIEPLRTREQARRDIVEYGGHEAAAAWQAMVDEPIGHAIAGAVANDLLRGVIATDALIGTFARMHEPSLMQNICFLYHLVGGGTGVWHVPIGGMGSVTSALATAAARHGAEIVTGADVFALDPDGTVRYHSDGSDGAEHLVRGRFVLVGVTPAVLASLLGEPVAALAPGAQVKVNMVVRRLPRLRDDSVTPQQAFAGTFHVNETWSQLDAAYSQAASGRLPDPLPCEAYCHSLTDPSILSARLRDAGAQTLTVFGLHTPHSVFGDTEGLAERLTAAVLASLNSVLAEPIQDVLWTDAQSKPCIETTTTLDLQRTLGMTGGNIFHGALSWPFADNDDPLDTPARQWGVATDHERIMLCGSGARRGGAVSGIGGHNAAMAVLACLASRRKSP.

2 helical membrane-spanning segments follow: residues Asp7 to Ala27 and Gly509 to Ala529.

The protein localises to the cell membrane. This is an uncharacterized protein from Mycobacterium bovis (strain ATCC BAA-935 / AF2122/97).